The chain runs to 322 residues: Ferrochelatase (322 aa).

2 residues coordinate Fe cation: His194 and Glu275.

This sequence belongs to the ferrochelatase family.

The protein resides in the cytoplasm. It carries out the reaction heme b + 2 H(+) = protoporphyrin IX + Fe(2+). The protein operates within porphyrin-containing compound metabolism; protoheme biosynthesis; protoheme from protoporphyrin-IX: step 1/1. Catalyzes the ferrous insertion into protoporphyrin IX. This chain is Ferrochelatase, found in Yersinia enterocolitica.